A 185-amino-acid chain; its full sequence is TATA-box-binding protein (185 aa).

A run of 2 repeats spans residues 8-84 and 99-175.

Belongs to the TBP family.

General factor that plays a role in the activation of archaeal genes transcribed by RNA polymerase. Binds specifically to the TATA box promoter element which lies close to the position of transcription initiation. The sequence is that of TATA-box-binding protein from Thermococcus sibiricus (strain DSM 12597 / MM 739).